The primary structure comprises 433 residues: GTPase Der (433 aa).

EngA-type G domains lie at 3 to 167 (KIVS…DKNI) and 175 to 349 (PRIA…FNLR). GTP contacts are provided by residues 9-16 (GRPNVGKS), 56-60 (DTGGY), 119-122 (NKID), 181-188 (GRPNVGKS), 228-232 (DTAGI), and 293-296 (NKWD). The KH-like domain occupies 350-433 (LRIKTSLLNK…IPIKILFRLK (84 aa)).

The protein belongs to the TRAFAC class TrmE-Era-EngA-EngB-Septin-like GTPase superfamily. EngA (Der) GTPase family. In terms of assembly, associates with the 50S ribosomal subunit.

Its function is as follows. GTPase that plays an essential role in the late steps of ribosome biogenesis. This Karelsulcia muelleri (strain GWSS) (Sulcia muelleri) protein is GTPase Der.